Reading from the N-terminus, the 273-residue chain is NH(3)-dependent NAD(+) synthetase (273 aa).

47 to 54 (GISGGQDS) contacts ATP. Aspartate 53 is a Mg(2+) binding site. Arginine 139 provides a ligand contact to deamido-NAD(+). Threonine 159 is an ATP binding site. Residue glutamate 164 participates in Mg(2+) binding. Deamido-NAD(+)-binding residues include lysine 172 and aspartate 179. Residues lysine 188 and threonine 210 each contribute to the ATP site. 259–260 (HK) is a deamido-NAD(+) binding site.

It belongs to the NAD synthetase family. In terms of assembly, homodimer.

It carries out the reaction deamido-NAD(+) + NH4(+) + ATP = AMP + diphosphate + NAD(+) + H(+). Its pathway is cofactor biosynthesis; NAD(+) biosynthesis; NAD(+) from deamido-NAD(+) (ammonia route): step 1/1. Its function is as follows. Catalyzes the ATP-dependent amidation of deamido-NAD to form NAD. Uses ammonia as a nitrogen source. In Staphylococcus aureus (strain N315), this protein is NH(3)-dependent NAD(+) synthetase.